Consider the following 568-residue polypeptide: MARVEL domain-containing protein 2 (568 aa).

Disordered regions lie at residues 1–72 (MSGG…YPSD) and 116–163 (SGGV…SYNS). The Cytoplasmic portion of the chain corresponds to 1 to 211 (MSGGGSSSGP…YMKSWAGLLR (211 aa)). Over residues 29–46 (ADPRHPETNLETLHDRDL) the composition is skewed to basic and acidic residues. Positions 52–62 (PLPPPPLPLHP) are enriched in pro residues. The MARVEL domain occupies 205–379 (SWAGLLRILC…SAMVSLKLWR (175 aa)). A helical transmembrane segment spans residues 212 to 232 (ILCIVELLLGAAVFACVTAYI). Topologically, residues 233 to 266 (HKDNEWYNMFGYSQPYGYTASMQGGYYYSGPKTP) are extracellular. A helical membrane pass occupies residues 267–287 (FVLVVAGLAWIVTIILLVLGM). At 288–303 (SMYYRTILLDSTWWPL) the chain is on the cytoplasmic side. Residues 304–324 (TEFGINISLFILYMAGAIVYV) traverse the membrane as a helical segment. At 325–354 (NDTNRGGLCYYQLFNTPVNASFCRVEGGQT) the chain is on the extracellular side. The helical transmembrane segment at 355-375 (AAIIFLFVSMLMYFISAMVSL) threads the bilayer. Residues 376 to 568 (KLWRHESARK…KVMDWNDGYN (193 aa)) are Cytoplasmic-facing. The 112-residue stretch at 451-562 (PDYVAKYQAI…RIQEYDKVMD (112 aa)) folds into the OCEL domain. Positions 462 to 559 (AEDERERYKA…IKQRIQEYDK (98 aa)) form a coiled coil.

It belongs to the ELL/occludin family.

It localises to the cell membrane. The protein resides in the cell junction. It is found in the tight junction. Functionally, may play a role in the formation of the epithelial barrier. The polypeptide is MARVEL domain-containing protein 2 (marveld2) (Xenopus tropicalis (Western clawed frog)).